A 538-amino-acid chain; its full sequence is Anti-bacteriophage protein A (538 aa).

As to quaternary structure, interacts with AbpB.

Functionally, part of an antiviral system composed of AbpA and AbpB; when both are expressed from a plasmid they confer resistance to phages T2, T4, T7 and lambda but not RB32 or RB69. Resistance is temperature dependent, it can be seen at 30 degrees Celsius but not at 37 or 42 degrees Celsius. The system impairs phage but not bacterial DNA synthesis (shown for T4, T7 and lambda). Partially suppressed by mutations in T4 gene 41, a replicative helicase. The sequence is that of Anti-bacteriophage protein A from Escherichia coli (strain K12).